We begin with the raw amino-acid sequence, 469 residues long: Ubiquitin carboxyl-terminal hydrolase MINDY-1 (469 aa).

Residues 1-105 (MEHHQPEHPA…RLQELPQSPR (105 aa)) form a disordered region. The segment covering 23 to 44 (ENHKVLSEPKEHPQDKDAKEAD) has biased composition (basic and acidic residues). Serine 103 is subject to Phosphoserine. Cysteine 137 serves as the catalytic Nucleophile. Histidine 319 serves as the catalytic Proton acceptor. The tract at residues 388–428 (QVDQDYLIALSLQQQQPPPQGTSGLSDLELAQQLQQEEYQQ) is ubiquitin-binding domain (UBD). A disordered region spans residues 401–469 (QQQPPPQGTS…PKQESDCVLL (69 aa)). The segment covering 415 to 448 (LELAQQLQQEEYQQHQAAQAAPARAPSPQGRGAA) has biased composition (low complexity). Serine 441 carries the phosphoserine modification. The span at 453 to 469 (AAERRQRPKQESDCVLL) shows a compositional bias: basic and acidic residues.

Belongs to the MINDY deubiquitinase family. FAM63 subfamily.

It catalyses the reaction Thiol-dependent hydrolysis of ester, thioester, amide, peptide and isopeptide bonds formed by the C-terminal Gly of ubiquitin (a 76-residue protein attached to proteins as an intracellular targeting signal).. Its function is as follows. Hydrolase that can specifically remove 'Lys-48'-linked conjugated ubiquitin from proteins. Has exodeubiquitinase activity and has a preference for long polyubiquitin chains. May play a regulatory role at the level of protein turnover. In Bos taurus (Bovine), this protein is Ubiquitin carboxyl-terminal hydrolase MINDY-1 (MINDY1).